The following is a 379-amino-acid chain: Chaperone protein DnaJ (379 aa).

One can recognise a J domain in the interval 5–69; it reads EYYERLGVDK…QKRAAYDQYG (65 aa). The CR-type zinc finger occupies 141 to 223; sequence GVEKQVKYNR…CHGSGHEKVA (83 aa). 7 residues coordinate Zn(2+): C154, C157, C171, C174, C197, C200, and C214. 4 CXXCXGXG motif repeats span residues 154 to 161, 171 to 178, 197 to 204, and 211 to 218; these read CHTCGGSG, CHKCGGRG, CDVCHGTG, and STTCHGSG.

This sequence belongs to the DnaJ family. In terms of assembly, homodimer. Requires Zn(2+) as cofactor.

Its subcellular location is the cytoplasm. Its function is as follows. Participates actively in the response to hyperosmotic and heat shock by preventing the aggregation of stress-denatured proteins and by disaggregating proteins, also in an autonomous, DnaK-independent fashion. Unfolded proteins bind initially to DnaJ; upon interaction with the DnaJ-bound protein, DnaK hydrolyzes its bound ATP, resulting in the formation of a stable complex. GrpE releases ADP from DnaK; ATP binding to DnaK triggers the release of the substrate protein, thus completing the reaction cycle. Several rounds of ATP-dependent interactions between DnaJ, DnaK and GrpE are required for fully efficient folding. Also involved, together with DnaK and GrpE, in the DNA replication of plasmids through activation of initiation proteins. This is Chaperone protein DnaJ from Lactococcus lactis subsp. cremoris (Streptococcus cremoris).